Reading from the N-terminus, the 727-residue chain is ATP-dependent zinc metalloprotease FtsH (727 aa).

Over 1–6 the chain is Cytoplasmic; that stretch reads MQKAFR. A helical membrane pass occupies residues 7–27; it reads NVLVIAIIGVIIFGVFSYING. The Extracellular portion of the chain corresponds to 28–110; that stretch reads NGNTPKQLSY…KVKEEEKQSV (83 aa). A helical membrane pass occupies residues 111 to 131; it reads FVSMLTTLIPVLIIAFLFIFF. The Cytoplasmic portion of the chain corresponds to 132-727; that stretch reads LSQAQGGGGG…PNDPNNPSNR (596 aa). 205–212 contacts ATP; the sequence is GPPGTGKT. His-427 contributes to the Zn(2+) binding site. Residue Glu-428 is part of the active site. Residues His-431 and Asp-503 each coordinate Zn(2+). Composition is skewed to basic and acidic residues over residues 645–684 and 691–706; these read LEEG…DQLR and NDQH…DTGH. The disordered stretch occupies residues 645–727; that stretch reads LEEGKEDMRE…PNDPNNPSNR (83 aa). The segment covering 710–727 has biased composition (low complexity); that stretch reads PNIDKPYNPNDPNNPSNR.

In the central section; belongs to the AAA ATPase family. It in the C-terminal section; belongs to the peptidase M41 family. As to quaternary structure, homohexamer. Zn(2+) serves as cofactor.

The protein resides in the cell membrane. Its function is as follows. Acts as a processive, ATP-dependent zinc metallopeptidase for both cytoplasmic and membrane proteins. Plays a role in the quality control of integral membrane proteins. The sequence is that of ATP-dependent zinc metalloprotease FtsH from Staphylococcus haemolyticus (strain JCSC1435).